A 670-amino-acid polypeptide reads, in one-letter code: DNA ligase (670 aa).

Residues 32–36 (DAEYD), 81–82 (SL), and glutamate 111 contribute to the NAD(+) site. Lysine 113 serves as the catalytic N6-AMP-lysine intermediate. NAD(+) contacts are provided by arginine 134, glutamate 171, lysine 290, and lysine 314. Positions 408, 411, 426, and 432 each coordinate Zn(2+). Residues 591 to 670 (EEALSLKGQT…DGLLAVLAGE (80 aa)) form the BRCT domain.

This sequence belongs to the NAD-dependent DNA ligase family. LigA subfamily. The cofactor is Mg(2+). Requires Mn(2+) as cofactor.

It catalyses the reaction NAD(+) + (deoxyribonucleotide)n-3'-hydroxyl + 5'-phospho-(deoxyribonucleotide)m = (deoxyribonucleotide)n+m + AMP + beta-nicotinamide D-nucleotide.. In terms of biological role, DNA ligase that catalyzes the formation of phosphodiester linkages between 5'-phosphoryl and 3'-hydroxyl groups in double-stranded DNA using NAD as a coenzyme and as the energy source for the reaction. It is essential for DNA replication and repair of damaged DNA. In Shewanella sediminis (strain HAW-EB3), this protein is DNA ligase.